A 401-amino-acid chain; its full sequence is MGFITKAIPLALAAASVINGAEILETRAGVQTLADKYIVVMNDGMSDKDFDSHRSWVNRTHRRRLIRRGAKAMGGMKYTYNFPTGLKGYSGHFDEQMIKEISKRADVKYIERDARVQINAIEQQDNVPSWGLARVGSREPGGTTYYYDSTAGEGTTAYIIDTGTDIQHEEFDGGRATWGENFVDDMDMDCNGHGTHVSGTVGGRTFGVAKKSNIVAVKVLDCNGSGSNSGVIMGMQWATEDAQSKGADKAVVNMSLGGAFSQTSNDAAKAIAEGGVFLAVAAGNDNVDAAEASPASEPSICTVAASTEQDGKADFSNFGQVVDVYAPGDGITSAKPGGGSQVLSGTSMASPHVAGLAAYLIGLGKGGGPQLCDTIKQMAIDVIQNPGSSTTSKLINNGSGM.

A signal peptide spans 1–20 (MGFITKAIPLALAAASVING). A propeptide spanning residues 21-119 (AEILETRAGV…IERDARVQIN (99 aa)) is cleaved from the precursor. Positions 36–118 (KYIVVMNDGM…YIERDARVQI (83 aa)) constitute an Inhibitor I9 domain. The N-linked (GlcNAc...) asparagine glycan is linked to asparagine 58. One can recognise a Peptidase S8 domain in the interval 129–401 (SWGLARVGSR…SKLINNGSGM (273 aa)). Residues aspartate 161 and histidine 193 each act as charge relay system in the active site. Asparagine 223 and asparagine 253 each carry an N-linked (GlcNAc...) asparagine glycan. Catalysis depends on serine 347, which acts as the Charge relay system. The N-linked (GlcNAc...) asparagine glycan is linked to asparagine 397.

It belongs to the peptidase S8 family.

Its subcellular location is the secreted. Functionally, secreted subtilisin-like serine protease with keratinolytic activity that contributes to pathogenicity. This is Subtilisin-like protease 7 (SUB7) from Trichophyton tonsurans (Scalp ringworm fungus).